The chain runs to 235 residues: Ubiquinone/menaquinone biosynthesis C-methyltransferase UbiE (235 aa).

S-adenosyl-L-methionine is bound by residues T59, D84, and S123.

The protein belongs to the class I-like SAM-binding methyltransferase superfamily. MenG/UbiE family.

It carries out the reaction a 2-demethylmenaquinol + S-adenosyl-L-methionine = a menaquinol + S-adenosyl-L-homocysteine + H(+). It catalyses the reaction a 2-methoxy-6-(all-trans-polyprenyl)benzene-1,4-diol + S-adenosyl-L-methionine = a 5-methoxy-2-methyl-3-(all-trans-polyprenyl)benzene-1,4-diol + S-adenosyl-L-homocysteine + H(+). The protein operates within quinol/quinone metabolism; menaquinone biosynthesis; menaquinol from 1,4-dihydroxy-2-naphthoate: step 2/2. Its pathway is cofactor biosynthesis; ubiquinone biosynthesis. Methyltransferase required for the conversion of demethylmenaquinol (DMKH2) to menaquinol (MKH2) and the conversion of 2-polyprenyl-6-methoxy-1,4-benzoquinol (DDMQH2) to 2-polyprenyl-3-methyl-6-methoxy-1,4-benzoquinol (DMQH2). The protein is Ubiquinone/menaquinone biosynthesis C-methyltransferase UbiE of Campylobacter jejuni subsp. jejuni serotype O:6 (strain 81116 / NCTC 11828).